Here is a 217-residue protein sequence, read N- to C-terminus: GrpE protein homolog 1, mitochondrial (217 aa).

Residues 1-27 (MAARCVRLARGSLPAFALSLRSSPRLL) constitute a mitochondrion transit peptide. N6-acetyllysine; alternate is present on Lys94. Lys94 carries the post-translational modification N6-succinyllysine; alternate. Position 100 is an N6-acetyllysine (Lys100). Lys120 carries the N6-succinyllysine modification. At Lys215 the chain carries N6-acetyllysine; alternate. Residue Lys215 is modified to N6-succinyllysine; alternate.

It belongs to the GrpE family. In terms of assembly, probable component of the PAM complex at least composed of a mitochondrial HSP70 protein, GRPEL1 or GRPEL2, TIMM44, TIMM16/PAM16 and TIMM14/DNAJC19. Binds to HSP70, HSC70 and HSJ1B.

The protein resides in the mitochondrion matrix. Its function is as follows. Essential component of the PAM complex, a complex required for the translocation of transit peptide-containing proteins from the inner membrane into the mitochondrial matrix in an ATP-dependent manner. Seems to control the nucleotide-dependent binding of mitochondrial HSP70 to substrate proteins. This Bos taurus (Bovine) protein is GrpE protein homolog 1, mitochondrial (GRPEL1).